A 443-amino-acid polypeptide reads, in one-letter code: Immediate-early protein ICP-46 homolog (443 aa).

A coiled-coil region spans residues 82 to 110 (EFSEHEQEELKEKMAQLNHCLEDCELDYS).

It belongs to the IIV-6 393L family.

The polypeptide is Immediate-early protein ICP-46 homolog (Aedes vexans (Inland floodwater mosquito)).